A 311-amino-acid polypeptide reads, in one-letter code: Cytosolic Fe-S cluster assembly factor Nubp1 homolog (311 aa).

The [4Fe-4S] cluster site is built by C9, C23, C26, and C32. 63–70 is an ATP binding site; the sequence is GKGGVGKS. Residues C241 and C244 each contribute to the [4Fe-4S] cluster site.

Belongs to the Mrp/NBP35 ATP-binding proteins family. NUBP1/NBP35 subfamily. Heterotetramer of 2 Nubp1 and 2 Nubp2 chains. It depends on [4Fe-4S] cluster as a cofactor.

The protein localises to the cytoplasm. Functionally, component of the cytosolic iron-sulfur (Fe/S) protein assembly (CIA) machinery. Required for maturation of extramitochondrial Fe-S proteins. The Nubp1-Nubp2 heterotetramer forms a Fe-S scaffold complex, mediating the de novo assembly of an Fe-S cluster and its transfer to target apoproteins. This is Cytosolic Fe-S cluster assembly factor Nubp1 homolog from Drosophila grimshawi (Hawaiian fruit fly).